We begin with the raw amino-acid sequence, 202 residues long: Endothelin-1 (202 aa).

A signal peptide spans 1–25 (MDYFPMIFALLFVAFQGAPEAAVLG). Residues 26 to 50 (TELSTGAESGGERPVPTTPWRPRRS) constitute a propeptide that is removed on maturation. Positions 29–48 (STGAESGGERPVPTTPWRPR) are disordered. 2 disulfide bridges follow: C53/C67 and C55/C63. A propeptide spanning residues 74–202 (VNTPEHVVPY…DKKVIYSRAH (129 aa)) is cleaved from the precursor. The tract at residues 110–124 (CQCASQTDKKCQNFC) is endothelin-like.

This sequence belongs to the endothelin/sarafotoxin family.

The protein resides in the secreted. In terms of biological role, endothelins are endothelium-derived vasoconstrictor peptides. Probable ligand for G-protein coupled receptors EDNRA and EDNRB which activates PTK2B, BCAR1, BCAR3 and, GTPases RAP1 and RHOA cascade in glomerular mesangial cells. Also binds the DEAR/FBXW7-AS1 receptor. Promotes mesenteric arterial wall remodeling via activation of ROCK signaling and subsequent colocalization of NFATC3 with F-actin filaments. NFATC3 then translocates to the nucleus where it subsequently promotes the transcription of the smooth muscle hypertrophy and differentiation marker ACTA2. The protein is Endothelin-1 (EDN1) of Ovis aries (Sheep).